Reading from the N-terminus, the 790-residue chain is Kinesin-like protein KIF9 (790 aa).

One can recognise a Kinesin motor domain in the interval 6-340 (KVQAFVRVRP…LRFASRMKLV (335 aa)). ATP is bound by residues 12-14 (RVR) and 93-100 (GQTGAGKT). A coiled-coil region spans residues 342–442 (TEPAINEKYD…EQEVESALRR (101 aa)). Residues 482 to 521 (GVAPFSVKPGKKPKTKKTPKDQFSSSARKEGASSPVSGKD) are disordered. Thr530 carries the post-translational modification Phosphothreonine. The segment at 547 to 577 (RERETSSIEPLISDSPKEELRAPRPSTPPSR) is disordered. Residues 600 to 695 (KSILNERKKR…YCQRLVDQCR (96 aa)) are a coiled coil.

This sequence belongs to the TRAFAC class myosin-kinesin ATPase superfamily. Kinesin family. Interacts with HYDIN. In terms of tissue distribution, highly expressed in the testis (at protein level). Weakly expressed in the brain, thymus, lung and heart.

Its subcellular location is the cytoplasm. It is found in the cytoskeleton. It localises to the cell projection. The protein resides in the cilium. The protein localises to the flagellum. Its subcellular location is the flagellum axoneme. Essential for normal male fertility and for progressive motility of spermatozoa. In Mus musculus (Mouse), this protein is Kinesin-like protein KIF9 (Kif9).